The chain runs to 302 residues: N-acetyl-D-glucosamine kinase (302 aa).

ATP is bound by residues 4-11 and 133-139; these read GFDIGGTK and GGGGLVL. Residues H156, C176, C178, and C183 each contribute to the Zn(2+) site.

This sequence belongs to the ROK (NagC/XylR) family. NagK subfamily.

It catalyses the reaction N-acetyl-D-glucosamine + ATP = N-acetyl-D-glucosamine 6-phosphate + ADP + H(+). Its pathway is cell wall biogenesis; peptidoglycan recycling. Catalyzes the phosphorylation of N-acetyl-D-glucosamine (GlcNAc) derived from cell-wall degradation, yielding GlcNAc-6-P. This Salmonella typhi protein is N-acetyl-D-glucosamine kinase.